Consider the following 402-residue polypeptide: Argininosuccinate synthase (402 aa).

Residues 10 to 18 and Ala38 contribute to the ATP site; that span reads AYSGGLDTS. An L-citrulline-binding site is contributed by Tyr90. Position 120 (Gly120) interacts with ATP. Residues Thr122, Asn126, and Asp127 each contribute to the L-aspartate site. Asn126 lines the L-citrulline pocket. L-citrulline-binding residues include Arg130, Ser179, Ser188, Glu264, and Tyr276.

Belongs to the argininosuccinate synthase family. Type 1 subfamily. In terms of assembly, homotetramer.

The protein localises to the cytoplasm. It carries out the reaction L-citrulline + L-aspartate + ATP = 2-(N(omega)-L-arginino)succinate + AMP + diphosphate + H(+). It functions in the pathway amino-acid biosynthesis; L-arginine biosynthesis; L-arginine from L-ornithine and carbamoyl phosphate: step 2/3. The polypeptide is Argininosuccinate synthase (Psychromonas ingrahamii (strain DSM 17664 / CCUG 51855 / 37)).